A 691-amino-acid chain; its full sequence is Elongation factor G (691 aa).

A tr-type G domain is found at E8–V282. GTP is bound by residues A17–T24, D81–H85, and N135–D138.

It belongs to the TRAFAC class translation factor GTPase superfamily. Classic translation factor GTPase family. EF-G/EF-2 subfamily.

The protein resides in the cytoplasm. In terms of biological role, catalyzes the GTP-dependent ribosomal translocation step during translation elongation. During this step, the ribosome changes from the pre-translocational (PRE) to the post-translocational (POST) state as the newly formed A-site-bound peptidyl-tRNA and P-site-bound deacylated tRNA move to the P and E sites, respectively. Catalyzes the coordinated movement of the two tRNA molecules, the mRNA and conformational changes in the ribosome. This is Elongation factor G from Prochlorococcus marinus (strain MIT 9313).